A 173-amino-acid chain; its full sequence is NADH-ubiquinone oxidoreductase chain 6 (173 aa).

Transmembrane regions (helical) follow at residues 1–21 (MTYF…AVAS), 27–47 (YGVV…LSLG), 48–68 (VSFV…VVFV), 87–107 (VVGY…VGGF), and 139–159 (CGVG…FVVL).

The protein belongs to the complex I subunit 6 family.

Its subcellular location is the mitochondrion membrane. The catalysed reaction is a ubiquinone + NADH + 5 H(+)(in) = a ubiquinol + NAD(+) + 4 H(+)(out). In terms of biological role, core subunit of the mitochondrial membrane respiratory chain NADH dehydrogenase (Complex I) that is believed to belong to the minimal assembly required for catalysis. Complex I functions in the transfer of electrons from NADH to the respiratory chain. The immediate electron acceptor for the enzyme is believed to be ubiquinone. The protein is NADH-ubiquinone oxidoreductase chain 6 (MT-ND6) of Aethia cristatella (Crested auklet).